The sequence spans 143 residues: Large ribosomal subunit protein uL11 (143 aa).

It belongs to the universal ribosomal protein uL11 family. In terms of assembly, part of the ribosomal stalk of the 50S ribosomal subunit. Interacts with L10 and the large rRNA to form the base of the stalk. L10 forms an elongated spine to which L12 dimers bind in a sequential fashion forming a multimeric L10(L12)X complex. In terms of processing, one or more lysine residues are methylated.

Forms part of the ribosomal stalk which helps the ribosome interact with GTP-bound translation factors. This chain is Large ribosomal subunit protein uL11, found in Dechloromonas aromatica (strain RCB).